A 38-amino-acid chain; its full sequence is U9-ctenitoxin-Pk1a (38 aa).

4 cysteine pairs are disulfide-bonded: cysteine 2-cysteine 17, cysteine 9-cysteine 22, cysteine 16-cysteine 36, and cysteine 24-cysteine 34.

In terms of tissue distribution, expressed by the venom gland.

The protein localises to the secreted. The protein is U9-ctenitoxin-Pk1a of Phoneutria keyserlingi (Brazilian wandering spider).